Consider the following 120-residue polypeptide: Small ribosomal subunit protein uS13 (120 aa).

A disordered region spans residues 96-120 (PCRGQRTRTNARTRKGPRKAIAGKK).

This sequence belongs to the universal ribosomal protein uS13 family. In terms of assembly, part of the 30S ribosomal subunit. Forms a loose heterodimer with protein S19. Forms two bridges to the 50S subunit in the 70S ribosome.

Located at the top of the head of the 30S subunit, it contacts several helices of the 16S rRNA. In the 70S ribosome it contacts the 23S rRNA (bridge B1a) and protein L5 of the 50S subunit (bridge B1b), connecting the 2 subunits; these bridges are implicated in subunit movement. Contacts the tRNAs in the A and P-sites. The sequence is that of Small ribosomal subunit protein uS13 from Chromobacterium violaceum (strain ATCC 12472 / DSM 30191 / JCM 1249 / CCUG 213 / NBRC 12614 / NCIMB 9131 / NCTC 9757 / MK).